Reading from the N-terminus, the 449-residue chain is Asparagine--tRNA ligase (449 aa).

The protein belongs to the class-II aminoacyl-tRNA synthetase family. In terms of assembly, homodimer.

It is found in the cytoplasm. The catalysed reaction is tRNA(Asn) + L-asparagine + ATP = L-asparaginyl-tRNA(Asn) + AMP + diphosphate + H(+). The protein is Asparagine--tRNA ligase of Desulfotalea psychrophila (strain LSv54 / DSM 12343).